Here is a 520-residue protein sequence, read N- to C-terminus: GMP synthase [glutamine-hydrolyzing] (520 aa).

One can recognise a Glutamine amidotransferase type-1 domain in the interval 8–202; it reads RLLIIDFGSQ…FVRLAGFTGD (195 aa). The active-site Nucleophile is the Cys86. Active-site residues include His177 and Glu179. The GMPS ATP-PPase domain occupies 203–395; sequence WTMDAYREQA…LGLPASFIGR (193 aa). 230–236 is a binding site for ATP; it reads SGGVDSS.

Homodimer.

The enzyme catalyses XMP + L-glutamine + ATP + H2O = GMP + L-glutamate + AMP + diphosphate + 2 H(+). Its pathway is purine metabolism; GMP biosynthesis; GMP from XMP (L-Gln route): step 1/1. Its function is as follows. Catalyzes the synthesis of GMP from XMP. The sequence is that of GMP synthase [glutamine-hydrolyzing] from Dinoroseobacter shibae (strain DSM 16493 / NCIMB 14021 / DFL 12).